The chain runs to 112 residues: 2Fe-2S ferredoxin (112 aa).

The 103-residue stretch at 5–107 (IKVTFIINDE…GIKVRLPSAT (103 aa)) folds into the 2Fe-2S ferredoxin-type domain. 4 residues coordinate [2Fe-2S] cluster: Cys-42, Cys-48, Cys-51, and Cys-88.

Belongs to the adrenodoxin/putidaredoxin family. The cofactor is [2Fe-2S] cluster.

Its function is as follows. Ferredoxin are iron-sulfur proteins that transfer electrons in a wide variety of metabolic reactions. The sequence is that of 2Fe-2S ferredoxin (fdxB) from Rickettsia prowazekii (strain Madrid E).